The primary structure comprises 289 residues: Acetylglutamate kinase (289 aa).

Substrate-binding positions include 60 to 61 (GG), R82, and N182.

This sequence belongs to the acetylglutamate kinase family. ArgB subfamily.

Its subcellular location is the cytoplasm. The catalysed reaction is N-acetyl-L-glutamate + ATP = N-acetyl-L-glutamyl 5-phosphate + ADP. It participates in amino-acid biosynthesis; L-arginine biosynthesis; N(2)-acetyl-L-ornithine from L-glutamate: step 2/4. In terms of biological role, catalyzes the ATP-dependent phosphorylation of N-acetyl-L-glutamate. This chain is Acetylglutamate kinase, found in Methanothrix thermoacetophila (strain DSM 6194 / JCM 14653 / NBRC 101360 / PT) (Methanosaeta thermophila).